The following is a 263-amino-acid chain: Small ribosomal subunit protein bS1c (263 aa).

S1 motif domains are found at residues 27–96 (GDIV…LSIR), 114–178 (DSLL…LSHR), and 192–260 (GNII…LSMK).

Belongs to the bacterial ribosomal protein bS1 family.

The protein resides in the plastid. Its subcellular location is the chloroplast. The sequence is that of Small ribosomal subunit protein bS1c (rps1) from Pyropia yezoensis (Susabi-nori).